The primary structure comprises 70 residues: Peptide BmKn1 (70 aa).

The N-terminal stretch at 1–23 is a signal peptide; that stretch reads MKSQTFFLLFLVVLLLAISQSEA. Phenylalanine amide is present on F36. Positions 40–70 are excised as a propeptide; the sequence is SMRDMDTMKYLYDPSLSAADLKTLQKLMENY.

It belongs to the non-disulfide-bridged peptide (NDBP) superfamily. Short antimicrobial peptide (group 4) family. In terms of tissue distribution, expressed by the venom gland.

Its subcellular location is the secreted. The protein localises to the target cell membrane. Functionally, antibacterial peptide. The chain is Peptide BmKn1 from Olivierus martensii (Manchurian scorpion).